The primary structure comprises 223 residues: Deoxyribose-phosphate aldolase (223 aa).

Aspartate 89 serves as the catalytic Proton donor/acceptor. Lysine 152 acts as the Schiff-base intermediate with acetaldehyde in catalysis. Lysine 181 acts as the Proton donor/acceptor in catalysis.

It belongs to the DeoC/FbaB aldolase family. DeoC type 1 subfamily.

The protein localises to the cytoplasm. It catalyses the reaction 2-deoxy-D-ribose 5-phosphate = D-glyceraldehyde 3-phosphate + acetaldehyde. Its pathway is carbohydrate degradation; 2-deoxy-D-ribose 1-phosphate degradation; D-glyceraldehyde 3-phosphate and acetaldehyde from 2-deoxy-alpha-D-ribose 1-phosphate: step 2/2. Functionally, catalyzes a reversible aldol reaction between acetaldehyde and D-glyceraldehyde 3-phosphate to generate 2-deoxy-D-ribose 5-phosphate. The sequence is that of Deoxyribose-phosphate aldolase from Bacillus cytotoxicus (strain DSM 22905 / CIP 110041 / 391-98 / NVH 391-98).